The sequence spans 696 residues: Rho-related BTB domain-containing protein 1 (696 aa).

Positions 1–210 (MDADMDYERP…DNAIRAALIS (210 aa)) are rho-like. GTP-binding positions include 21–28 (GDNAVGKT), 84–88 (DTFGD), and 140–143 (CQLD). 2 consecutive BTB domains span residues 266–427 (ADVL…DEKE) and 485–552 (SDVT…SPNL). The segment at 327 to 348 (VDPEEEREEGPPRIPQADQWKS) is disordered.

It belongs to the small GTPase superfamily. Rho family. As to expression, ubiquitous, with highest levels in skeletal muscle, placenta, testis, stomach, and kidney, followed by uterus and adrenal gland. Expressed in a variety of fetal tissues.

This chain is Rho-related BTB domain-containing protein 1 (RHOBTB1), found in Homo sapiens (Human).